The following is a 177-amino-acid chain: Large ribosomal subunit protein uL16 (177 aa).

The protein belongs to the universal ribosomal protein uL16 family.

The sequence is that of Large ribosomal subunit protein uL16 from Natronomonas pharaonis (strain ATCC 35678 / DSM 2160 / CIP 103997 / JCM 8858 / NBRC 14720 / NCIMB 2260 / Gabara) (Halobacterium pharaonis).